A 254-amino-acid chain; its full sequence is MVIANKNIIFVAGLGGIGFDTSREIVKSGPKNLVILDRIENPAAIAELKALNPKVIVTFYPYDVTVPVAETTKLLKIIFDKLKTVDLLINGAGILDDYQIERTIAVNFTGTVNTTTAIMSFWDKRKGGPGGVIANICSVTGFNAIYQVPVYSASKAAALSFTNSLAKLAPITGVTAYSINPGITKTTLVHKFNSWLDVEPRVAELLLEHPTQTTLQCAQNFVKAIEANQNGAIWKLDLGRLEAIEWTKHWDSHI.

10–33 provides a ligand contact to NAD(+); it reads FVAGLGGIGFDTSREIVKSGPKNL. Ser-138 is a substrate binding site. Residue Tyr-151 is the Proton acceptor of the active site.

It belongs to the short-chain dehydrogenases/reductases (SDR) family. As to quaternary structure, homodimer.

It carries out the reaction a primary alcohol + NAD(+) = an aldehyde + NADH + H(+). It catalyses the reaction a secondary alcohol + NAD(+) = a ketone + NADH + H(+). This is Alcohol dehydrogenase (Adh) from Drosophila mayaguana (Fruit fly).